The following is a 385-amino-acid chain: 8-amino-7-oxononanoate synthase (385 aa).

Residue arginine 21 participates in substrate binding. 108-109 (GF) lines the pyridoxal 5'-phosphate pocket. Histidine 133 serves as a coordination point for substrate. Residues serine 179, histidine 207, and threonine 233 each coordinate pyridoxal 5'-phosphate. Position 236 is an N6-(pyridoxal phosphate)lysine (lysine 236). Threonine 352 is a substrate binding site.

It belongs to the class-II pyridoxal-phosphate-dependent aminotransferase family. BioF subfamily. As to quaternary structure, homodimer. The cofactor is pyridoxal 5'-phosphate.

The catalysed reaction is 6-carboxyhexanoyl-[ACP] + L-alanine + H(+) = (8S)-8-amino-7-oxononanoate + holo-[ACP] + CO2. The protein operates within cofactor biosynthesis; biotin biosynthesis. Its function is as follows. Catalyzes the decarboxylative condensation of pimeloyl-[acyl-carrier protein] and L-alanine to produce 8-amino-7-oxononanoate (AON), [acyl-carrier protein], and carbon dioxide. This chain is 8-amino-7-oxononanoate synthase, found in Salmonella paratyphi C (strain RKS4594).